Consider the following 444-residue polypeptide: tRNA modification GTPase MnmE (444 aa).

(6S)-5-formyl-5,6,7,8-tetrahydrofolate is bound by residues arginine 23, glutamate 82, and lysine 121. The TrmE-type G domain occupies 216–365 (GTSIVLAGLP…LKQALQKWLN (150 aa)). A K(+)-binding site is contributed by asparagine 226. Residues 226–231 (NAGKSS), 245–251 (TDIPGTT), and 270–273 (DSAG) each bind GTP. Serine 230 provides a ligand contact to Mg(2+). K(+) contacts are provided by threonine 245, isoleucine 247, and threonine 250. Mg(2+) is bound at residue threonine 251. Lysine 444 contacts (6S)-5-formyl-5,6,7,8-tetrahydrofolate.

Belongs to the TRAFAC class TrmE-Era-EngA-EngB-Septin-like GTPase superfamily. TrmE GTPase family. In terms of assembly, homodimer. Heterotetramer of two MnmE and two MnmG subunits. It depends on K(+) as a cofactor.

It localises to the cytoplasm. Its function is as follows. Exhibits a very high intrinsic GTPase hydrolysis rate. Involved in the addition of a carboxymethylaminomethyl (cmnm) group at the wobble position (U34) of certain tRNAs, forming tRNA-cmnm(5)s(2)U34. The protein is tRNA modification GTPase MnmE of Chlamydia trachomatis serovar A (strain ATCC VR-571B / DSM 19440 / HAR-13).